Reading from the N-terminus, the 486-residue chain is N-succinylglutamate 5-semialdehyde dehydrogenase (486 aa).

Residue 220-225 (GSSRTG) participates in NAD(+) binding. Catalysis depends on residues Glu243 and Cys277.

Belongs to the aldehyde dehydrogenase family. AstD subfamily.

It catalyses the reaction N-succinyl-L-glutamate 5-semialdehyde + NAD(+) + H2O = N-succinyl-L-glutamate + NADH + 2 H(+). Its pathway is amino-acid degradation; L-arginine degradation via AST pathway; L-glutamate and succinate from L-arginine: step 4/5. Functionally, catalyzes the NAD-dependent reduction of succinylglutamate semialdehyde into succinylglutamate. This is N-succinylglutamate 5-semialdehyde dehydrogenase from Shewanella baltica (strain OS223).